Here is a 398-residue protein sequence, read N- to C-terminus: Phosphoglycerate kinase (398 aa).

Substrate-binding positions include 23–25 (DFN), R38, 61–64 (HMGK), R122, and R155. Residues K206, G297, E328, and 354 to 357 (GGDS) each bind ATP.

The protein belongs to the phosphoglycerate kinase family. Monomer.

The protein resides in the cytoplasm. The catalysed reaction is (2R)-3-phosphoglycerate + ATP = (2R)-3-phospho-glyceroyl phosphate + ADP. Its pathway is carbohydrate degradation; glycolysis; pyruvate from D-glyceraldehyde 3-phosphate: step 2/5. The sequence is that of Phosphoglycerate kinase from Clostridium botulinum (strain Kyoto / Type A2).